We begin with the raw amino-acid sequence, 137 residues long: MTSPPTFGLSKSERLYLRDEINTVFGEGKAFVVYPLRVVYRLGSEHRVAYSSMLVSVAKKRFRRAVKRNRVKRLVREAYRLNKHLLNDVLQERQIYATIAFMVVSDELPDFRTVERAMQKSLIRIAGNVPSSALKNE.

It belongs to the RnpA family. In terms of assembly, consists of a catalytic RNA component (M1 or rnpB) and a protein subunit.

It catalyses the reaction Endonucleolytic cleavage of RNA, removing 5'-extranucleotides from tRNA precursor.. Its function is as follows. RNaseP catalyzes the removal of the 5'-leader sequence from pre-tRNA to produce the mature 5'-terminus. It can also cleave other RNA substrates such as 4.5S RNA. The protein component plays an auxiliary but essential role in vivo by binding to the 5'-leader sequence and broadening the substrate specificity of the ribozyme. This chain is Ribonuclease P protein component, found in Porphyromonas gingivalis (strain ATCC BAA-308 / W83).